Reading from the N-terminus, the 215-residue chain is Peptide methionine sulfoxide reductase MsrA (215 aa).

The active site involves Cys58.

This sequence belongs to the MsrA Met sulfoxide reductase family.

It carries out the reaction L-methionyl-[protein] + [thioredoxin]-disulfide + H2O = L-methionyl-(S)-S-oxide-[protein] + [thioredoxin]-dithiol. It catalyses the reaction [thioredoxin]-disulfide + L-methionine + H2O = L-methionine (S)-S-oxide + [thioredoxin]-dithiol. In terms of biological role, has an important function as a repair enzyme for proteins that have been inactivated by oxidation. Catalyzes the reversible oxidation-reduction of methionine sulfoxide in proteins to methionine. The polypeptide is Peptide methionine sulfoxide reductase MsrA (Pseudomonas aeruginosa (strain LESB58)).